The chain runs to 360 residues: S-adenosylmethionine-dependent nucleotide dehydratase RSAD2 (360 aa).

Positions K44–P71 are disordered. Over residues V49–P63 the composition is skewed to basic and acidic residues. A Radical SAM core domain is found at P68–L288. Residues C82, C86, and C89 each contribute to the [4Fe-4S] cluster site. K196 is modified (N6-acetyllysine). K205 is covalently cross-linked (Glycyl lysine isopeptide (Lys-Gly) (interchain with G-Cter in ubiquitin)).

The protein belongs to the radical SAM superfamily. RSAD2 family. As to quaternary structure, homodimer. Interacts with IRAK1 and TRAF6. Interacts with FPPS. Interacts with HADHB. Interacts (via C-terminus) with VAPA/VAP33 (via C-terminus). Requires [4Fe-4S] cluster as cofactor. Acetylated by HAT1. HAT1-mediated acetylation of Lys-196 in turn recruits UBE4A that stimulates RSAD2 polyubiquitination leading to proteasomal degradation. Post-translationally, 'Lys-6'-linked polyubiquitination at Lys-205 leads to RSAD2 protein degradation. As to expression, in neonatal rat tibia, specifically localized in cells of the periosteum, in osteoblasts lining endosteal and peristeal bone surfaces, to articular surfaces of cartilage and in perichondral cells but not in chondrocytes (at protein level). Expressed predominantly in bone marrow and spleen.

It is found in the endoplasmic reticulum membrane. The protein resides in the golgi apparatus. It localises to the endoplasmic reticulum. Its subcellular location is the lipid droplet. The protein localises to the mitochondrion. It is found in the mitochondrion inner membrane. The protein resides in the mitochondrion outer membrane. The catalysed reaction is CTP + AH2 + S-adenosyl-L-methionine = 3'-deoxy-3',4'-didehydro-CTP + 5'-deoxyadenosine + L-methionine + A + H2O + H(+). Its activity is regulated as follows. IRAK1 and TRAF6 synergistically activate RSAD2 increasing its activity with CTP as substrate about 10-fold. In terms of biological role, interferon-inducible antiviral protein which plays a major role in the cell antiviral state induced by type I and type II interferon. Catalyzes the conversion of cytidine triphosphate (CTP) to 3'-deoxy-3',4'-didehydro-CTP (ddhCTP) via a SAM-dependent radical mechanism. In turn, ddhCTP acts as a chain terminator for the RNA-dependent RNA polymerases from multiple viruses and directly inhibits viral replication. Therefore, inhibits a wide range of DNA and RNA viruses. Also promotes TLR7 and TLR9-dependent production of IFN-beta production in plasmacytoid dendritic cells (pDCs) by facilitating 'Lys-63'-linked ubiquitination of IRAK1 by TRAF6. Plays a role in CD4+ T-cells activation and differentiation. Facilitates T-cell receptor (TCR)-mediated GATA3 activation and optimal T-helper 2 (Th2) cytokine production by modulating NFKB1 and JUNB activities. Can inhibit secretion of soluble proteins. The chain is S-adenosylmethionine-dependent nucleotide dehydratase RSAD2 from Rattus norvegicus (Rat).